The chain runs to 141 residues: Putative nickel-responsive regulator (141 aa).

4 residues coordinate Ni(2+): H80, H91, H93, and C99.

This sequence belongs to the transcriptional regulatory CopG/NikR family. Homotetramer. Ni(2+) serves as cofactor.

Functionally, transcriptional regulator. The sequence is that of Putative nickel-responsive regulator from Methanocaldococcus jannaschii (strain ATCC 43067 / DSM 2661 / JAL-1 / JCM 10045 / NBRC 100440) (Methanococcus jannaschii).